The following is a 170-amino-acid chain: Protein-export protein SecB (170 aa).

The protein belongs to the SecB family. As to quaternary structure, homotetramer, a dimer of dimers. One homotetramer interacts with 1 SecA dimer.

It is found in the cytoplasm. Functionally, one of the proteins required for the normal export of preproteins out of the cell cytoplasm. It is a molecular chaperone that binds to a subset of precursor proteins, maintaining them in a translocation-competent state. It also specifically binds to its receptor SecA. The polypeptide is Protein-export protein SecB (Pasteurella multocida (strain Pm70)).